Here is a 204-residue protein sequence, read N- to C-terminus: Large ribosomal subunit protein eL15 (204 aa).

A disordered region spans residues Gly-185–Arg-204. Over residues Ala-190–Arg-204 the composition is skewed to basic residues.

It belongs to the eukaryotic ribosomal protein eL15 family.

This Drosophila melanogaster (Fruit fly) protein is Large ribosomal subunit protein eL15 (RpL15).